Reading from the N-terminus, the 319-residue chain is MPEKTAVLLLQMGGPDSIEAVEPFLLNLFSDREIIKIGPAFLQPFIARRICRKRAPKVEGYYSQIGGKSPIRELTEAQAQALEEKLGGNFRCFVAMRYWKPTTIDALAAIKREGISRVIALSLYPHYSRATTGSSINELKRVLGEAGARFEVSYVDRFYDHPLYIAALAAKIEEGLAQFSNRSEVELVFSAHSLPQSFIDEGDPYLSHILETVRLVMERLGNVNYHLAFQSRAGPVKWLEPSTEEMIQKLAKGGCKELLMVPLSFVSDHIETLYEIDIQYAEEAKGLGIEHFRRSPSLNTSPLFIDCLANLVHKTVSSE.

Positions 192 and 271 each coordinate Fe cation.

The protein belongs to the ferrochelatase family.

Its subcellular location is the cytoplasm. The enzyme catalyses heme b + 2 H(+) = protoporphyrin IX + Fe(2+). Its pathway is porphyrin-containing compound metabolism; protoheme biosynthesis; protoheme from protoporphyrin-IX: step 1/1. Functionally, catalyzes the ferrous insertion into protoporphyrin IX. This Geotalea uraniireducens (strain Rf4) (Geobacter uraniireducens) protein is Ferrochelatase.